A 479-amino-acid polypeptide reads, in one-letter code: MNFETIIGLEVHVELKTNSKIFSPAPAHFGEDPNANTNIVDWSFPGVLPVMNKGVIDYGIKAALALNMDIHQRMHFDRKNYFYPDNPKAYQISQFDEPIGYNGWIEIELEDGSTKKIRIERAHLEEDAGKNTHGADGYSYVDLNRQGVPLIEIVSEADMRSPEEAYAYLTALKEIIQYTGISDVKMEEGSMRVDANISIRPYGQEAFGVKTELKNLNSFNFVRRGLAYEEKRQAEVLRSGGQIQQETRRYDEATGETLLMRVKEGSADYRYFPEPDLPIFEIEDEWIEKVRAELPAFPKERRAKYVNDLGLSAYDAAQLTSSKAISDFFESALAQGADAKAVSNWLQGDVAQYLNTENQTIDQIGLTPENLTEMLQLVADGTISSKIAKKVFVHLAKNGGSAKEYVKSAGLIQISDPAQLLPIIQEVFANNEKALNDYKGGNKNAAKSLVGQIMKATRGQANPQVAQKLLNEELAKLTD.

This sequence belongs to the GatB/GatE family. GatB subfamily. Heterotrimer of A, B and C subunits.

The catalysed reaction is L-glutamyl-tRNA(Gln) + L-glutamine + ATP + H2O = L-glutaminyl-tRNA(Gln) + L-glutamate + ADP + phosphate + H(+). It carries out the reaction L-aspartyl-tRNA(Asn) + L-glutamine + ATP + H2O = L-asparaginyl-tRNA(Asn) + L-glutamate + ADP + phosphate + 2 H(+). Allows the formation of correctly charged Asn-tRNA(Asn) or Gln-tRNA(Gln) through the transamidation of misacylated Asp-tRNA(Asn) or Glu-tRNA(Gln) in organisms which lack either or both of asparaginyl-tRNA or glutaminyl-tRNA synthetases. The reaction takes place in the presence of glutamine and ATP through an activated phospho-Asp-tRNA(Asn) or phospho-Glu-tRNA(Gln). The chain is Aspartyl/glutamyl-tRNA(Asn/Gln) amidotransferase subunit B from Streptococcus mutans serotype c (strain ATCC 700610 / UA159).